Consider the following 70-residue polypeptide: DNA-binding transcriptional activator AlpA (70 aa).

Residues 12 to 31 (LPAVIQKTGMARATIYDWLN) constitute a DNA-binding region (H-T-H motif).

Functionally, positive regulator of the expression of the slpA gene. When overexpressed, leads to suppression of the capsule overproduction and UV sensitivity phenotypes of cells mutant for the Lon ATP-dependent protease. Part of the cryptic P4-like prophage CP4-57. Overexpression of AlpA leads to excision of the CP4-57 prophage by IntA. This inactivates ssrA (the gene upstream of the prophage) that encodes tmRNA which is required to rescue stalled ribosomes in a process known as trans-translation. In Escherichia coli (strain K12), this protein is DNA-binding transcriptional activator AlpA.